Reading from the N-terminus, the 435-residue chain is Protein phosphatase 2C homolog 2 (435 aa).

A PPM-type phosphatase domain is found at 23–298 (IYGVSAMQGW…DNMTMIIIGL (276 aa)). Aspartate 71, glycine 72, aspartate 240, and aspartate 289 together coordinate Mn(2+). A disordered region spans residues 366–435 (DQTEEDRDLP…TSGAPEKSTS (70 aa)). The segment covering 381 to 392 (ELPDSARNEREG) has biased composition (basic and acidic residues). Residues 409–418 (GSSASTSEST) show a composition bias toward low complexity. Polar residues predominate over residues 419-435 (VTPAGSSTSGAPEKSTS).

Belongs to the PP2C family. Requires Mg(2+) as cofactor. It depends on Mn(2+) as a cofactor.

The protein resides in the cytoplasm. It localises to the nucleus. It carries out the reaction O-phospho-L-seryl-[protein] + H2O = L-seryl-[protein] + phosphate. The catalysed reaction is O-phospho-L-threonyl-[protein] + H2O = L-threonyl-[protein] + phosphate. In terms of biological role, dephosphorylating regulator for many key proteins. Dephosphorylates phosphoglycerate kinase pgk1 at least on 'Ser-203' to negatively regulate targeting of pgk1 to the mitochondrion, thereby negatively regulating production of acetyl-CoA and consequently aflatoxin biosynthesis. This Aspergillus flavus (strain ATCC 200026 / FGSC A1120 / IAM 13836 / NRRL 3357 / JCM 12722 / SRRC 167) protein is Protein phosphatase 2C homolog 2.